We begin with the raw amino-acid sequence, 928 residues long: DNA mismatch repair protein MutS (928 aa).

Position 613 to 620 (Gly613 to Ser620) interacts with ATP. The span at Lys854–Ser872 shows a compositional bias: basic and acidic residues. Residues Lys854–Ser880 form a disordered region.

This sequence belongs to the DNA mismatch repair MutS family.

In terms of biological role, this protein is involved in the repair of mismatches in DNA. It is possible that it carries out the mismatch recognition step. This protein has a weak ATPase activity. This chain is DNA mismatch repair protein MutS, found in Clostridium beijerinckii (strain ATCC 51743 / NCIMB 8052) (Clostridium acetobutylicum).